We begin with the raw amino-acid sequence, 701 residues long: Acetyl-coenzyme A synthetase, cytoplasmic (701 aa).

The span at 1–26 shows a compositional bias: basic and acidic residues; sequence MGLPEERRKSGSGSRAREETGAEGRV. The segment at 1–37 is disordered; that stretch reads MGLPEERRKSGSGSRAREETGAEGRVRGWSPPPEVRR. The segment at 1–107 is interaction with TFEB; it reads MGLPEERRKS…GATTNICYNV (107 aa). The residue at position 30 (Ser-30) is a Phosphoserine. Position 219 to 222 (219 to 222) interacts with CoA; the sequence is RGEK. Ser-263, Ser-265, and Ser-267 each carry phosphoserine. Position 363 (Thr-363) interacts with CoA. The residue at position 418 (Lys-418) is an N6-acetyllysine. Residues 439-441, 463-468, Asp-552, and Arg-567 each bind ATP; these read GEP and DTFWQT. Positions 575 and 636 each coordinate CoA. A Nuclear localization signal motif is present at residues 656–668; the sequence is KTRSGKIMRRVLR. Ser-659 is subject to Phosphoserine; by AMPK. Lys-661 is subject to N6-acetyllysine.

The protein belongs to the ATP-dependent AMP-binding enzyme family. As to quaternary structure, monomer. Interacts with TFEB. AMPK-mediated phosphorylated form at Ser-659 interacts with KPNA1; this interaction results in nuclear translocation of ACSS2. Interacts with the 'Thr-172' phosphorylated form of PRKAA2. Interacts with CREBBP. Post-translationally, reversibly acetylated at Lys-661. The acetyl-CoA synthase activity is inhibited by acetylation and activated by deacetylation mediated by the deacetylases SIRT1 and SIRT3. In terms of tissue distribution, expressed in the hippocampus.

The protein localises to the cytoplasm. It is found in the cytosol. Its subcellular location is the nucleus. It carries out the reaction acetate + ATP + CoA = acetyl-CoA + AMP + diphosphate. The enzyme catalyses propanoate + ATP + CoA = propanoyl-CoA + AMP + diphosphate. With respect to regulation, inhibited by acetylation at Lys-661 and activated by deacetylation mediated by the deacetylases SIRT1 and SIRT3. Catalyzes the synthesis of acetyl-CoA from short-chain fatty acids. Acetate is the preferred substrate but can also utilize propionate with a much lower affinity. Nuclear ACSS2 promotes glucose deprivation-induced lysosomal biogenesis and autophagy, tumor cell survival and brain tumorigenesis. Glucose deprivation results in AMPK-mediated phosphorylation of ACSS2 leading to its translocation to the nucleus where it binds to TFEB and locally produces acetyl-CoA for histone acetylation in the promoter regions of TFEB target genes thereby activating their transcription. The regulation of genes associated with autophagy and lysosomal activity through ACSS2 is important for brain tumorigenesis and tumor survival. Acts as a chromatin-bound transcriptional coactivator that up-regulates histone acetylation and expression of neuronal genes. Can be recruited to the loci of memory-related neuronal genes to maintain a local acetyl-CoA pool, providing the substrate for histone acetylation and promoting the expression of specific genes, which is essential for maintaining long-term spatial memory. This is Acetyl-coenzyme A synthetase, cytoplasmic (Acss2) from Mus musculus (Mouse).